We begin with the raw amino-acid sequence, 76 residues long: Exodeoxyribonuclease 7 small subunit (76 aa).

The protein belongs to the XseB family. As to quaternary structure, heterooligomer composed of large and small subunits.

It is found in the cytoplasm. The catalysed reaction is Exonucleolytic cleavage in either 5'- to 3'- or 3'- to 5'-direction to yield nucleoside 5'-phosphates.. In terms of biological role, bidirectionally degrades single-stranded DNA into large acid-insoluble oligonucleotides, which are then degraded further into small acid-soluble oligonucleotides. The chain is Exodeoxyribonuclease 7 small subunit from Staphylococcus haemolyticus (strain JCSC1435).